Reading from the N-terminus, the 285-residue chain is ATP phosphoribosyltransferase (285 aa).

It belongs to the ATP phosphoribosyltransferase family. Long subfamily. Mg(2+) serves as cofactor.

Its subcellular location is the cytoplasm. The catalysed reaction is 1-(5-phospho-beta-D-ribosyl)-ATP + diphosphate = 5-phospho-alpha-D-ribose 1-diphosphate + ATP. The protein operates within amino-acid biosynthesis; L-histidine biosynthesis; L-histidine from 5-phospho-alpha-D-ribose 1-diphosphate: step 1/9. With respect to regulation, feedback inhibited by histidine. Catalyzes the condensation of ATP and 5-phosphoribose 1-diphosphate to form N'-(5'-phosphoribosyl)-ATP (PR-ATP). Has a crucial role in the pathway because the rate of histidine biosynthesis seems to be controlled primarily by regulation of HisG enzymatic activity. The polypeptide is ATP phosphoribosyltransferase (Streptomyces avermitilis (strain ATCC 31267 / DSM 46492 / JCM 5070 / NBRC 14893 / NCIMB 12804 / NRRL 8165 / MA-4680)).